The sequence spans 136 residues: ATP synthase F(0) complex subunit C1, mitochondrial (136 aa).

The N-terminal 61 residues, 1–61 (MQTAGALFIS…REFQTSVVSR (61 aa)), are a transit peptide targeting the mitochondrion. Residues 77–97 (VGVAGSGAGIGTVFGSLIIGY) form a helical membrane-spanning segment. The residue at position 104 (Lys-104) is an N6,N6,N6-trimethyllysine. Residues 112-132 (ILGFALSEAMGLFCLMVAFLI) traverse the membrane as a helical segment.

It belongs to the ATPase C chain family. Homooctamer; the c-ring consists of eight c subunits forming a circle, and each subunit adopts a hairpin shape. Component of the ATP synthase complex composed at least of ATP5F1A/subunit alpha, ATP5F1B/subunit beta, ATP5MC1/subunit c (homooctomer), MT-ATP6/subunit a, MT-ATP8/subunit 8, ATP5ME/subunit e, ATP5MF/subunit f, ATP5MG/subunit g, ATP5MK/subunit k, ATP5MJ/subunit j, ATP5F1C/subunit gamma, ATP5F1D/subunit delta, ATP5F1E/subunit epsilon, ATP5PF/subunit F6, ATP5PB/subunit b, ATP5PD/subunit d, ATP5PO/subunit OSCP. ATP synthase complex consists of a soluble F(1) head domain (subunits alpha(3) and beta(3)) - the catalytic core - and a membrane F(0) domain - the membrane proton channel (subunits c, a, 8, e, f, g, k and j). These two domains are linked by a central stalk (subunits gamma, delta, and epsilon) rotating inside the F1 region and a stationary peripheral stalk (subunits F6, b, d, and OSCP). Interacts with TMEM70 (homooligomer form); this interaction facilitates the oligomer formation of subunit c/ATP5MC1 (c-ring) and the c-ring membrane insertion and also protects ATP5MC1 against intramitochondrial proteolysis. Post-translationally, trimethylated by ATPSCKMT at Lys-104. Methylation is required for proper incorporation of the C subunit into the ATP synthase complex and mitochondrial respiration.

The protein resides in the mitochondrion membrane. It carries out the reaction H(+)(in) = H(+)(out). In terms of biological role, subunit c, of the mitochondrial membrane ATP synthase complex (F(1)F(0) ATP synthase or Complex V) that produces ATP from ADP in the presence of a proton gradient across the membrane which is generated by electron transport complexes of the respiratory chain. ATP synthase complex consist of a soluble F(1) head domain - the catalytic core - and a membrane F(1) domain - the membrane proton channel. These two domains are linked by a central stalk rotating inside the F(1) region and a stationary peripheral stalk. During catalysis, ATP synthesis in the catalytic domain of F(1) is coupled via a rotary mechanism of the central stalk subunits to proton translocation. With the subunit a (MT-ATP6), forms the proton-conducting channel in the F(0) domain, that contains two crucial half-channels (inlet and outlet) that facilitate proton movement from the mitochondrial intermembrane space (IMS) into the matrix. Protons are taken up via the inlet half-channel and released through the outlet half-channel, following a Grotthuss mechanism. The chain is ATP synthase F(0) complex subunit C1, mitochondrial from Homo sapiens (Human).